The primary structure comprises 159 residues: ATP synthase subunit delta, mitochondrial (159 aa).

Residues 1 to 23 (MFRLSAARTLAKSVNTVVAKRTY) constitute a mitochondrion transit peptide.

The protein belongs to the ATPase epsilon chain family. As to quaternary structure, F-type ATPases have 2 components, CF(1) - the catalytic core - and CF(0) - the membrane proton channel. CF(1) has five subunits: alpha(3), beta(3), gamma(1), delta(1), epsilon(1). CF(0) has three main subunits: a, b and c.

It is found in the mitochondrion. It localises to the mitochondrion inner membrane. Functionally, mitochondrial membrane ATP synthase (F(1)F(0) ATP synthase or Complex V) produces ATP from ADP in the presence of a proton gradient across the membrane which is generated by electron transport complexes of the respiratory chain. F-type ATPases consist of two structural domains, F(1) - containing the extramembraneous catalytic core, and F(0) - containing the membrane proton channel, linked together by a central stalk and a peripheral stalk. During catalysis, ATP turnover in the catalytic domain of F(1) is coupled via a rotary mechanism of the central stalk subunits to proton translocation. Part of the complex F(1) domain and of the central stalk which is part of the complex rotary element. Rotation of the central stalk against the surrounding alpha(3)beta(3) subunits leads to hydrolysis of ATP in three separate catalytic sites on the beta subunits. This Kluyveromyces lactis (strain ATCC 8585 / CBS 2359 / DSM 70799 / NBRC 1267 / NRRL Y-1140 / WM37) (Yeast) protein is ATP synthase subunit delta, mitochondrial (ATP16).